Here is a 743-residue protein sequence, read N- to C-terminus: Cytosolic endo-beta-N-acetylglucosaminidase (743 aa).

The residue at position 1 (methionine 1) is an N-acetylmethionine. Positions 1–11 (MEAAAVTVTRS) are enriched in low complexity. The interval 1–55 (MEAAAVTVTRSATRRRRRQLQGLAAPEAGTQEEQEDQEPRPRRRRPGRSIKDEEE) is disordered. Serine 66 is subject to Phosphoserine. Residues 291–383 (RVFFDSCDGF…DFFQNQDKFW (93 aa)) enclose the BRCT domain.

It belongs to the glycosyl hydrolase 85 family. As to expression, widely expressed. Expressed at higher level in thymus and spleen.

The protein localises to the cytoplasm. Its subcellular location is the cytosol. It carries out the reaction an N(4)-(oligosaccharide-(1-&gt;3)-[oligosaccharide-(1-&gt;6)]-beta-D-Man-(1-&gt;4)-beta-D-GlcNAc-(1-&gt;4)-alpha-D-GlcNAc)-L-asparaginyl-[protein] + H2O = an oligosaccharide-(1-&gt;3)-[oligosaccharide-(1-&gt;6)]-beta-D-Man-(1-&gt;4)-D-GlcNAc + N(4)-(N-acetyl-beta-D-glucosaminyl)-L-asparaginyl-[protein]. Its function is as follows. Endoglycosidase that releases N-glycans from glycoproteins by cleaving the beta-1,4-glycosidic bond in the N,N'-diacetylchitobiose core. Involved in the processing of free oligosaccharides in the cytosol. This Homo sapiens (Human) protein is Cytosolic endo-beta-N-acetylglucosaminidase (ENGASE).